The following is a 745-amino-acid chain: Elongation factor G, mitochondrial (745 aa).

Residues 40 to 317 (ERIRNIGISA…AVLDYLPNPG (278 aa)) form the tr-type G domain. GTP-binding positions include 49–56 (AHIDSGKT), 116–120 (DTPGH), and 170–173 (NKLD).

Belongs to the TRAFAC class translation factor GTPase superfamily. Classic translation factor GTPase family. EF-G/EF-2 subfamily.

It is found in the mitochondrion. Its pathway is protein biosynthesis; polypeptide chain elongation. Functionally, mitochondrial GTPase that catalyzes the GTP-dependent ribosomal translocation step during translation elongation. During this step, the ribosome changes from the pre-translocational (PRE) to the post-translocational (POST) state as the newly formed A-site-bound peptidyl-tRNA and P-site-bound deacylated tRNA move to the P and E sites, respectively. Catalyzes the coordinated movement of the two tRNA molecules, the mRNA and conformational changes in the ribosome. Essential during development as it acts as a retrograde signal from mitochondria to the nucleus to slow down cell proliferation if mitochondrial energy output is low. The polypeptide is Elongation factor G, mitochondrial (Drosophila sechellia (Fruit fly)).